A 197-amino-acid polypeptide reads, in one-letter code: Phospholipid hydroperoxide glutathione peroxidase (197 aa).

At S40 the chain carries Phosphoserine. U73 is a catalytic residue. U73 is a non-standard amino acid (selenocysteine). V78 is modified (phosphoserine).

It belongs to the glutathione peroxidase family. In terms of assembly, monomer. Has a tendency to form higher mass oligomers. Interacts with FUNDC1; this interaction promotes GPX4 recruitment into mitochondria through TOM/TIM complex where it is degraded by mitophagy. Present primarily in testis. Expressed in flagella of epididymal sperm. Isoform Cytoplasmic: Highly expressed in testis. Present in spermatogonia, spermatocyte and spermatid (at protein level).

It is found in the nucleus. Its subcellular location is the nucleolus. The protein resides in the mitochondrion. The protein localises to the cytoplasm. The catalysed reaction is a hydroperoxy polyunsaturated fatty acid + 2 glutathione = a hydroxy polyunsaturated fatty acid + glutathione disulfide + H2O. It carries out the reaction 2 glutathione + H2O2 = glutathione disulfide + 2 H2O. It catalyses the reaction tert-butyl hydroperoxide + 2 glutathione = tert-butanol + glutathione disulfide + H2O. The enzyme catalyses cumene hydroperoxide + 2 glutathione = 2-phenylpropan-2-ol + glutathione disulfide + H2O. The catalysed reaction is (9S)-hydroperoxy-(10E,12Z)-octadecadienoate + 2 glutathione = (9S)-hydroxy-(10E,12Z)-octadecadienoate + glutathione disulfide + H2O. It carries out the reaction (13S)-hydroperoxy-(9Z,11E)-octadecadienoate + 2 glutathione = (13S)-hydroxy-(9Z,11E)-octadecadienoate + glutathione disulfide + H2O. It catalyses the reaction (5S)-hydroperoxy-(6E,8Z,11Z,14Z)-eicosatetraenoate + 2 glutathione = (5S)-hydroxy-(6E,8Z,11Z,14Z)-eicosatetraenoate + glutathione disulfide + H2O. The enzyme catalyses (12R)-hydroperoxy-(5Z,8Z,10E,14Z)-eicosatetraenoate + 2 glutathione = (12R)-hydroxy-(5Z,8Z,10E,14Z)-eicosatetraenoate + glutathione disulfide + H2O. The catalysed reaction is (12S)-hydroperoxy-(5Z,8Z,10E,14Z)-eicosatetraenoate + 2 glutathione = (12S)-hydroxy-(5Z,8Z,10E,14Z)-eicosatetraenoate + glutathione disulfide + H2O. It carries out the reaction (15S)-hydroperoxy-(5Z,8Z,11Z,13E)-eicosatetraenoate + 2 glutathione = (15S)-hydroxy-(5Z,8Z,11Z,13E)-eicosatetraenoate + glutathione disulfide + H2O. It catalyses the reaction (5S)-hydroperoxy-(6E,8Z,11Z,14Z,17Z)-eicosapentaenoate + 2 glutathione = (5S)-hydroxy-(6E,8Z,11Z,14Z,17Z)-eicosapentaenoate + glutathione disulfide + H2O. The enzyme catalyses (12S)-hydroperoxy-(5Z,8Z,10E,14Z,17Z)-eicosapentaenoate + 2 glutathione = (12S)-hydroxy-(5Z,8Z,10E,14Z,17Z)-eicosapentaenoate + glutathione disulfide + H2O. The catalysed reaction is (15S)-hydroperoxy-(5Z,8Z,11Z,13E,17Z)-eicosapentaenoate + 2 glutathione = (15S)-hydroxy-(5Z,8Z,11Z,13E,17Z)-eicosapentaenoate + glutathione disulfide + H2O. It carries out the reaction (15S)-hydroperoxy-(11Z,13E)-eicosadienoate + 2 glutathione = (15S)-hydroxy-(11Z,13E)-eicosadienoate + glutathione disulfide + H2O. It catalyses the reaction (17S)-hydroperoxy-(4Z,7Z,10Z,13Z,15E,19Z)-docosahexaenoate + 2 glutathione = (17S)-hydroxy-(4Z,7Z,10Z,13Z,15E,19Z)-docosahexaenoate + glutathione disulfide + H2O. The enzyme catalyses a hydroperoxy-1,2-diacyl-glycero-3-phosphocholine + 2 glutathione = a hydroxy-1,2-diacyl-glycero-3-phosphocholine + glutathione disulfide + H2O. Functionally, essential antioxidant peroxidase that directly reduces phospholipid hydroperoxide even if they are incorporated in membranes and lipoproteins. Can also reduce fatty acid hydroperoxide, cholesterol hydroperoxide and thymine hydroperoxide. Plays a key role in protecting cells from oxidative damage by preventing membrane lipid peroxidation. Required to prevent cells from ferroptosis, a non-apoptotic cell death resulting from an iron-dependent accumulation of lipid reactive oxygen species. The presence of selenocysteine (Sec) versus Cys at the active site is essential for life: it provides resistance to overoxidation and prevents cells against ferroptosis. The presence of Sec at the active site is also essential for the survival of a specific type of parvalbumin-positive interneurons, thereby preventing against fatal epileptic seizures. May be required to protect cells from the toxicity of ingested lipid hydroperoxides. Required for normal sperm development and male fertility. Essential for maturation and survival of photoreceptor cells. Plays a role in a primary T-cell response to viral and parasitic infection by protecting T-cells from ferroptosis and by supporting T-cell expansion. Plays a role of glutathione peroxidase in platelets in the arachidonic acid metabolism. Reduces hydroperoxy ester lipids formed by a 15-lipoxygenase that may play a role as down-regulator of the cellular 15-lipoxygenase pathway. Can also reduce small soluble hydroperoxides such as H2O2, cumene hydroperoxide and tert-butyl hydroperoxide. Specifically able to suppress the production of leukotriene and prostaglandin in response to several stimuli by reducing fatty acid hydroperoxide. In terms of biological role, specifically required to prevent mitochondrial cell death by mediating reduction of cardiolipin hydroperoxide. Also required for normal sperm development and male fertility. Its function is as follows. Required for male fertility by stabilizing the condensed chromatin in sperm nuclei. The chain is Phospholipid hydroperoxide glutathione peroxidase from Rattus norvegicus (Rat).